A 247-amino-acid chain; its full sequence is Adenosylcobinamide-GDP ribazoletransferase (247 aa).

4 helical membrane passes run 34-54 (IITF…VFMV), 59-79 (CGVP…TGGF), 113-133 (GGLA…ELAL), and 194-214 (VLLP…AIFI).

Belongs to the CobS family. Mg(2+) serves as cofactor.

It is found in the cell inner membrane. The enzyme catalyses alpha-ribazole + adenosylcob(III)inamide-GDP = adenosylcob(III)alamin + GMP + H(+). It catalyses the reaction alpha-ribazole 5'-phosphate + adenosylcob(III)inamide-GDP = adenosylcob(III)alamin 5'-phosphate + GMP + H(+). It functions in the pathway cofactor biosynthesis; adenosylcobalamin biosynthesis; adenosylcobalamin from cob(II)yrinate a,c-diamide: step 7/7. Its function is as follows. Joins adenosylcobinamide-GDP and alpha-ribazole to generate adenosylcobalamin (Ado-cobalamin). Also synthesizes adenosylcobalamin 5'-phosphate from adenosylcobinamide-GDP and alpha-ribazole 5'-phosphate. The chain is Adenosylcobinamide-GDP ribazoletransferase from Escherichia coli (strain ATCC 8739 / DSM 1576 / NBRC 3972 / NCIMB 8545 / WDCM 00012 / Crooks).